The following is a 238-amino-acid chain: Mitochondrial inner membrane protease ATP23 (238 aa).

H138 provides a ligand contact to a divalent metal cation. E139 is an active-site residue. H142 serves as a coordination point for a divalent metal cation.

The protein belongs to the peptidase M76 family.

The protein resides in the mitochondrion inner membrane. In terms of biological role, has a dual role in the assembly of mitochondrial ATPase. Acts as a protease that removes N-terminal residues of mitochondrial ATPase CF(0) subunit 6 at the intermembrane space side. Also involved in the correct assembly of the membrane-embedded ATPase CF(0) particle, probably mediating association of subunit 6 with the subunit 9 ring. The protein is Mitochondrial inner membrane protease ATP23 (ATP23) of Candida albicans (strain SC5314 / ATCC MYA-2876) (Yeast).